We begin with the raw amino-acid sequence, 631 residues long: Nucleoside triphosphatase I (631 aa).

The 163-residue stretch at 42–204 (FLGLDSMHSL…TMLVNLLRPG (163 aa)) folds into the Helicase ATP-binding domain. 55 to 62 (HETGVGKT) contacts ATP. The short motif at 141-144 (DECH) is the DEXH box element. A Helicase C-terminal domain is found at 367–532 (KFIDVCLGIL…EFVQLFRVFK (166 aa)). The binding to the cap-specific mRNA (nucleoside-2'-O-)-methyltransferase stretch occupies residues 457-524 (DIFILDMTWN…EIIQSKSKEF (68 aa)).

Belongs to the helicase family. NPH I subfamily. Monomer. Interacts (via C-terminus) with RAP94/OPG109 (via N-terminus). Interacts with the cap-specific mRNA (nucleoside-2'-O-)-methyltransferase OPG102.

It localises to the virion. The enzyme catalyses a ribonucleoside 5'-triphosphate + H2O = a ribonucleoside 5'-diphosphate + phosphate + H(+). Functionally, DNA-dependent ATPase that acts as a 5' to 3' translocase on single-stranded DNA and thereby plays a role in transcription termination of viral early genes. Uses forward translocation in concert with the viral RNA polymerase RAP94/OPG109 subunit and the capping enzyme/VTF to catalyze release of UUUUUNU-containing nascent RNA from the elongation complex. In addition, acts as a positive elongation factor to assist transcription through problematic sequences. The sequence is that of Nucleoside triphosphatase I (OPG123) from Variola virus (isolate Human/India/Ind3/1967) (VARV).